A 98-amino-acid chain; its full sequence is Large ribosomal subunit protein uL23 (98 aa).

The protein belongs to the universal ribosomal protein uL23 family. In terms of assembly, part of the 50S ribosomal subunit. Contacts protein L29, and trigger factor when it is bound to the ribosome.

One of the early assembly proteins it binds 23S rRNA. One of the proteins that surrounds the polypeptide exit tunnel on the outside of the ribosome. Forms the main docking site for trigger factor binding to the ribosome. This chain is Large ribosomal subunit protein uL23, found in Rickettsia bellii (strain OSU 85-389).